The following is a 157-amino-acid chain: UPF0178 protein Nwi_2152 (157 aa).

Belongs to the UPF0178 family.

This is UPF0178 protein Nwi_2152 from Nitrobacter winogradskyi (strain ATCC 25391 / DSM 10237 / CIP 104748 / NCIMB 11846 / Nb-255).